Here is a 618-residue protein sequence, read N- to C-terminus: Phosphoenolpyruvate carboxykinase [GTP] (618 aa).

Residues R83 and 217–219 (YGG) each bind substrate. Residues K226 and H245 each coordinate Mn(2+). S267 contacts substrate. Residue 268 to 273 (MCGKTS) coordinates GTP. Residue C269 is part of the active site. D286 provides a ligand contact to Mn(2+). 381 to 383 (NAR) serves as a coordination point for substrate. GTP is bound by residues R383 and R415.

It belongs to the phosphoenolpyruvate carboxykinase [GTP] family. Mn(2+) serves as cofactor.

It is found in the cytoplasm. It catalyses the reaction oxaloacetate + GTP = phosphoenolpyruvate + GDP + CO2. The protein operates within carbohydrate biosynthesis; gluconeogenesis. In terms of biological role, catalyzes the conversion of oxaloacetate (OAA) to phosphoenolpyruvate (PEP), the rate-limiting step in the metabolic pathway that produces glucose from lactate and other precursors derived from the citric acid cycle. The polypeptide is Phosphoenolpyruvate carboxykinase [GTP] (Pyrococcus abyssi (strain GE5 / Orsay)).